The primary structure comprises 919 residues: Lipoxygenase 3, chloroplastic (919 aa).

The N-terminal 52 residues, 1–52 (MALAKELMGYPLITERSSLVSSASHFKKRTQSTQFSINPFDRRPRKTKSGVV), are a transit peptide targeting the chloroplast. The PLAT domain maps to 86–222 (VRAVVTVRNK…DHPDKRIFFT (137 aa)). One can recognise a Lipoxygenase domain in the interval 225–919 (PYLPNETPSG…CRGVPNSVSI (695 aa)). Positions 272-310 (PDKSSELSRPKLGGKEVPYPRRCRTGRQSTVSDKDAESR) are disordered. Fe cation-binding residues include His-578, His-583, His-770, Asn-774, and Ile-919.

This sequence belongs to the lipoxygenase family. Requires Fe cation as cofactor. As to expression, expressed in roots and leaves.

The protein resides in the plastid. Its subcellular location is the chloroplast. It carries out the reaction (9Z,12Z)-octadecadienoate + O2 = (13S)-hydroperoxy-(9Z,11E)-octadecadienoate. The catalysed reaction is (9Z,12Z,15Z)-octadecatrienoate + O2 = (13S)-hydroperoxy-(9Z,11E,15Z)-octadecatrienoate. It participates in lipid metabolism; oxylipin biosynthesis. In terms of biological role, 13S-lipoxygenase that can use linolenic acid as substrates. Plant lipoxygenases may be involved in a number of diverse aspects of plant physiology including growth and development, pest resistance, and senescence or responses to wounding. Catalyzes the hydroperoxidation of lipids containing a cis,cis-1,4-pentadiene structure. The chain is Lipoxygenase 3, chloroplastic (LOX3) from Arabidopsis thaliana (Mouse-ear cress).